We begin with the raw amino-acid sequence, 324 residues long: Beta-ketoacyl-[acyl-carrier-protein] synthase III (324 aa).

Residues cysteine 112 and histidine 249 contribute to the active site. Residues 250 to 254 are ACP-binding; sequence QANDR. The active site involves asparagine 279.

The protein belongs to the thiolase-like superfamily. FabH family. In terms of assembly, homodimer.

It is found in the cytoplasm. The catalysed reaction is malonyl-[ACP] + acetyl-CoA + H(+) = 3-oxobutanoyl-[ACP] + CO2 + CoA. Its pathway is lipid metabolism; fatty acid biosynthesis. Functionally, catalyzes the condensation reaction of fatty acid synthesis by the addition to an acyl acceptor of two carbons from malonyl-ACP. Catalyzes the first condensation reaction which initiates fatty acid synthesis and may therefore play a role in governing the total rate of fatty acid production. Possesses both acetoacetyl-ACP synthase and acetyl transacylase activities. Its substrate specificity determines the biosynthesis of branched-chain and/or straight-chain of fatty acids. In Streptococcus pneumoniae serotype 19F (strain G54), this protein is Beta-ketoacyl-[acyl-carrier-protein] synthase III.